A 132-amino-acid chain; its full sequence is Large ribosomal subunit protein bL17 (132 aa).

This sequence belongs to the bacterial ribosomal protein bL17 family. In terms of assembly, part of the 50S ribosomal subunit. Contacts protein L32.

This Ruthia magnifica subsp. Calyptogena magnifica protein is Large ribosomal subunit protein bL17.